The sequence spans 303 residues: Diaminopimelate epimerase (303 aa).

Residues Asn15, Gln47, and Asn67 each coordinate substrate. Residue Cys76 is the Proton donor of the active site. Substrate-binding positions include 77–78, Asn163, Asn197, and 215–216; these read GN and ER. The active-site Proton acceptor is the Cys224. 225–226 lines the substrate pocket; sequence GS.

The protein belongs to the diaminopimelate epimerase family. Homodimer.

Its subcellular location is the cytoplasm. The enzyme catalyses (2S,6S)-2,6-diaminopimelate = meso-2,6-diaminopimelate. The protein operates within amino-acid biosynthesis; L-lysine biosynthesis via DAP pathway; DL-2,6-diaminopimelate from LL-2,6-diaminopimelate: step 1/1. Functionally, catalyzes the stereoinversion of LL-2,6-diaminopimelate (L,L-DAP) to meso-diaminopimelate (meso-DAP), a precursor of L-lysine and an essential component of the bacterial peptidoglycan. In Allorhizobium ampelinum (strain ATCC BAA-846 / DSM 112012 / S4) (Agrobacterium vitis (strain S4)), this protein is Diaminopimelate epimerase.